The sequence spans 370 residues: UDP-N-acetylglucosamine--N-acetylmuramyl-(pentapeptide) pyrophosphoryl-undecaprenol N-acetylglucosamine transferase (370 aa).

UDP-N-acetyl-alpha-D-glucosamine contacts are provided by residues 15-17 (TGG), asparagine 129, arginine 171, serine 200, isoleucine 256, and glutamine 301.

This sequence belongs to the glycosyltransferase 28 family. MurG subfamily.

It is found in the cell membrane. The catalysed reaction is di-trans,octa-cis-undecaprenyl diphospho-N-acetyl-alpha-D-muramoyl-L-alanyl-D-glutamyl-meso-2,6-diaminopimeloyl-D-alanyl-D-alanine + UDP-N-acetyl-alpha-D-glucosamine = di-trans,octa-cis-undecaprenyl diphospho-[N-acetyl-alpha-D-glucosaminyl-(1-&gt;4)]-N-acetyl-alpha-D-muramoyl-L-alanyl-D-glutamyl-meso-2,6-diaminopimeloyl-D-alanyl-D-alanine + UDP + H(+). Its pathway is cell wall biogenesis; peptidoglycan biosynthesis. Functionally, cell wall formation. Catalyzes the transfer of a GlcNAc subunit on undecaprenyl-pyrophosphoryl-MurNAc-pentapeptide (lipid intermediate I) to form undecaprenyl-pyrophosphoryl-MurNAc-(pentapeptide)GlcNAc (lipid intermediate II). The sequence is that of UDP-N-acetylglucosamine--N-acetylmuramyl-(pentapeptide) pyrophosphoryl-undecaprenol N-acetylglucosamine transferase from Caldicellulosiruptor saccharolyticus (strain ATCC 43494 / DSM 8903 / Tp8T 6331).